The sequence spans 579 residues: Multidrug resistance-like ATP-binding protein MdlA (579 aa).

Positions 18 to 303 (YTIAIFLLIS…FAWMFNIIER (286 aa)) constitute an ABC transmembrane type-1 domain. Helical transmembrane passes span 20 to 40 (IAIF…KLIG), 53 to 73 (KAPI…IYIL), 134 to 154 (GVLT…VMIT), 155 to 175 (QISW…AIII), 247 to 267 (IIHL…SYMI), and 281 to 301 (ILYL…FNII). Residues 338–572 (VKINYFKYSK…LKQWYGKTYL (235 aa)) enclose the ABC transporter domain. 370-377 (GPTGSGKS) contacts ATP.

This sequence belongs to the ABC transporter superfamily. Drug exporter-2 (TC 3.A.1.117) family.

It is found in the cell membrane. The enzyme catalyses ATP + H2O + xenobioticSide 1 = ADP + phosphate + xenobioticSide 2.. This chain is Multidrug resistance-like ATP-binding protein MdlA (mdlA), found in Buchnera aphidicola subsp. Baizongia pistaciae (strain Bp).